The chain runs to 131 residues: Small ribosomal subunit protein uS8 (131 aa).

It belongs to the universal ribosomal protein uS8 family. Part of the 30S ribosomal subunit. Contacts proteins S5 and S12.

Functionally, one of the primary rRNA binding proteins, it binds directly to 16S rRNA central domain where it helps coordinate assembly of the platform of the 30S subunit. This Burkholderia lata (strain ATCC 17760 / DSM 23089 / LMG 22485 / NCIMB 9086 / R18194 / 383) protein is Small ribosomal subunit protein uS8.